We begin with the raw amino-acid sequence, 941 residues long: MSDYKHTLNLPKTGFPMRGNLAKREPERLAGWYQTDLYGRLRRERAGKPRFVLHDGPPYANGDIHIGHAVNKILKDIIIKARSMDGYDVPYVPGWDCHGLPIELMVEKKRGKAGAKVSPRAFRDACREFAASQVDGQREDFKRLGVLGDWDNPYLTMDYRTEADILRALGRIIQRGHVTRGFKPVHWCADCGSALAEAEVEYEEKTSPAIDVRFAVLEPEELDRRAGLGGEAAAAGRVAIPIWTTTPWTLPANQAVALHPELEYVVVAFDDELLVLAAELVESAMARYEVDDYRVVGRCDGAVLEGLRLAHPFLEREVPVILGGHVTTDGGTGAVHTAPGHGQDDYVVGQQYDLPTDNPVDGNGVFLPDTPFFAGQHVFKANPKVVDLLAERGALLHHEPYRHSYPHCWRHKTPILFRATPQWFISLDKAGMREHAMAAIKGVSWHPEWGQARIESMVNGRPDWCISRQRNWGVPIALFVDKRSGEPHPESERLIEAVARRVEEAGVDAWFELDPAELLGADAERYEKVTDILDVWFDSGVTHATVLERRDELQVPADLYLEGSDQHRGWFQSSLLTSVGVRETAPYKGVLTHGFTVDEKGHKMSKSRGNVVAPQKVMDTLGADILRLWVASSDYSAEMAVSDGILKRTADAYRRMRNTARFLLANLNGFEPAEHAVAPPDMLPLDRWAVDRAYLLQQQVREAYERYEFHRIYQMVHNFCVVDLGGFYLDVIKDRQYTTKPDSLARRSCQTALWHVAEGLVRWLAPIISFTAEEIWEHLPGERSDSVLLETWYEGLFPLDDSDPFGRAFWDDVLAVRAGVNRELEQLRNDKVIGASLQAEVQLFCPPELKAKLDRLGDELRFVLITSEARVEDLERAPVESVEVPGENGQGFRLFAAASQHPKCTRCWHHRPDVGHHADHPELCGRCVSNVDGEGETRHYA.

The 'HIGH' region signature appears at 58 to 68; the sequence is PYANGDIHIGH. Glutamate 562 is an L-isoleucyl-5'-AMP binding site. The 'KMSKS' region motif lies at 603–607; that stretch reads KMSKS. Position 606 (lysine 606) interacts with ATP. Zn(2+)-binding residues include cysteine 904, cysteine 907, cysteine 924, and cysteine 927.

The protein belongs to the class-I aminoacyl-tRNA synthetase family. IleS type 1 subfamily. In terms of assembly, monomer. It depends on Zn(2+) as a cofactor.

The protein resides in the cytoplasm. It catalyses the reaction tRNA(Ile) + L-isoleucine + ATP = L-isoleucyl-tRNA(Ile) + AMP + diphosphate. Functionally, catalyzes the attachment of isoleucine to tRNA(Ile). As IleRS can inadvertently accommodate and process structurally similar amino acids such as valine, to avoid such errors it has two additional distinct tRNA(Ile)-dependent editing activities. One activity is designated as 'pretransfer' editing and involves the hydrolysis of activated Val-AMP. The other activity is designated 'posttransfer' editing and involves deacylation of mischarged Val-tRNA(Ile). This chain is Isoleucine--tRNA ligase, found in Alkalilimnicola ehrlichii (strain ATCC BAA-1101 / DSM 17681 / MLHE-1).